A 334-amino-acid polypeptide reads, in one-letter code: ADP-L-glycero-D-manno-heptose-6-epimerase (334 aa).

NADP(+)-binding positions include 11–12 (FI), 32–33 (DN), lysine 39, lysine 54, 77–81 (QGACS), and asparagine 94. Tyrosine 141 functions as the Proton acceptor in the catalytic mechanism. Residue lysine 145 coordinates NADP(+). Position 171 (asparagine 171) interacts with substrate. Positions 172 and 180 each coordinate NADP(+). Catalysis depends on lysine 180, which acts as the Proton acceptor. Substrate contacts are provided by residues arginine 182, histidine 189, 203–206 (FGSN), arginine 216, and tyrosine 295.

The protein belongs to the NAD(P)-dependent epimerase/dehydratase family. HldD subfamily. In terms of assembly, homopentamer. It depends on NADP(+) as a cofactor.

The enzyme catalyses ADP-D-glycero-beta-D-manno-heptose = ADP-L-glycero-beta-D-manno-heptose. It functions in the pathway nucleotide-sugar biosynthesis; ADP-L-glycero-beta-D-manno-heptose biosynthesis; ADP-L-glycero-beta-D-manno-heptose from D-glycero-beta-D-manno-heptose 7-phosphate: step 4/4. The protein operates within bacterial outer membrane biogenesis; LOS core biosynthesis. Functionally, catalyzes the interconversion between ADP-D-glycero-beta-D-manno-heptose and ADP-L-glycero-beta-D-manno-heptose via an epimerization at carbon 6 of the heptose. This is ADP-L-glycero-D-manno-heptose-6-epimerase from Neisseria meningitidis serogroup A / serotype 4A (strain DSM 15465 / Z2491).